The chain runs to 539 residues: Phosphoenolpyruvate carboxykinase (ATP) (539 aa).

3 residues coordinate substrate: Arg-64, Tyr-206, and Lys-212. ATP contacts are provided by residues Lys-212, His-231, and 247 to 255 (GLSGTGKTT). 2 residues coordinate Mn(2+): Lys-212 and His-231. Residue Asp-268 participates in Mn(2+) binding. ATP is bound by residues Glu-296, Arg-332, 448 to 449 (RI), and Thr-454. Substrate is bound at residue Arg-332.

This sequence belongs to the phosphoenolpyruvate carboxykinase (ATP) family. In terms of assembly, monomer. It depends on Mn(2+) as a cofactor.

It is found in the cytoplasm. The catalysed reaction is oxaloacetate + ATP = phosphoenolpyruvate + ADP + CO2. Its pathway is carbohydrate biosynthesis; gluconeogenesis. Its function is as follows. Involved in the gluconeogenesis. Catalyzes the conversion of oxaloacetate (OAA) to phosphoenolpyruvate (PEP) through direct phosphoryl transfer between the nucleoside triphosphate and OAA. This is Phosphoenolpyruvate carboxykinase (ATP) from Edwardsiella ictaluri (strain 93-146).